The following is a 374-amino-acid chain: Phospho-N-acetylmuramoyl-pentapeptide-transferase (374 aa).

The next 10 membrane-spanning stretches (helical) occupy residues 3–23 (AVIVAVGVAFLVSLFCTPIAI), 52–72 (MGGVVFILATVIAYVAGHLAL), 85–105 (PTITALVLLGLMVFSGAVGFI), 125–145 (LLGQILVGAVFGVIALYFPST), 170–190 (IPALELTKVGAVVLFIFVVMA), 201–221 (LDGLATGASVMVLAAYALIAF), 244–264 (PLEIALIAGAAAGACVGFLWW), 271–291 (IFMGDTGALGLGGLIAGMAMS), 294–314 (TILLLPIIGGLFVIITMSVVI), and 350–370 (FWIIAGIGVAIALGLFYSEFL).

It belongs to the glycosyltransferase 4 family. MraY subfamily. Mg(2+) serves as cofactor.

The protein resides in the cell membrane. It carries out the reaction UDP-N-acetyl-alpha-D-muramoyl-L-alanyl-gamma-D-glutamyl-meso-2,6-diaminopimeloyl-D-alanyl-D-alanine + di-trans,octa-cis-undecaprenyl phosphate = di-trans,octa-cis-undecaprenyl diphospho-N-acetyl-alpha-D-muramoyl-L-alanyl-D-glutamyl-meso-2,6-diaminopimeloyl-D-alanyl-D-alanine + UMP. The protein operates within cell wall biogenesis; peptidoglycan biosynthesis. Catalyzes the initial step of the lipid cycle reactions in the biosynthesis of the cell wall peptidoglycan: transfers peptidoglycan precursor phospho-MurNAc-pentapeptide from UDP-MurNAc-pentapeptide onto the lipid carrier undecaprenyl phosphate, yielding undecaprenyl-pyrophosphoryl-MurNAc-pentapeptide, known as lipid I. The polypeptide is Phospho-N-acetylmuramoyl-pentapeptide-transferase (Salinispora arenicola (strain CNS-205)).